A 448-amino-acid polypeptide reads, in one-letter code: Exodeoxyribonuclease 7 large subunit (448 aa).

Belongs to the XseA family. In terms of assembly, heterooligomer composed of large and small subunits.

Its subcellular location is the cytoplasm. It carries out the reaction Exonucleolytic cleavage in either 5'- to 3'- or 3'- to 5'-direction to yield nucleoside 5'-phosphates.. Bidirectionally degrades single-stranded DNA into large acid-insoluble oligonucleotides, which are then degraded further into small acid-soluble oligonucleotides. The protein is Exodeoxyribonuclease 7 large subunit of Nitrosomonas eutropha (strain DSM 101675 / C91 / Nm57).